Reading from the N-terminus, the 43-residue chain is Potassium channel toxin gamma-KTx 4.9 (43 aa).

Disulfide bonds link C5–C23, C11–C34, C20–C39, and C24–C41.

The protein belongs to the ergtoxin family. Gamma-KTx 4 subfamily. Expressed by the venom gland.

It is found in the secreted. Reversibly blocks Kv11/ERG potassium channels. This is Potassium channel toxin gamma-KTx 4.9 from Centruroides sculpturatus (Arizona bark scorpion).